Consider the following 910-residue polypeptide: Valine--tRNA ligase (910 aa).

Residues 45-55 (PNVTGSLHMGH) carry the 'HIGH' region motif. Residues 554 to 558 (KMSKS) carry the 'KMSKS' region motif. Lys-557 is a binding site for ATP. A coiled-coil region spans residues 842–910 (DLQAEAARLA…TAESRIRDAS (69 aa)).

This sequence belongs to the class-I aminoacyl-tRNA synthetase family. ValS type 1 subfamily. Monomer.

It is found in the cytoplasm. The catalysed reaction is tRNA(Val) + L-valine + ATP = L-valyl-tRNA(Val) + AMP + diphosphate. In terms of biological role, catalyzes the attachment of valine to tRNA(Val). As ValRS can inadvertently accommodate and process structurally similar amino acids such as threonine, to avoid such errors, it has a 'posttransfer' editing activity that hydrolyzes mischarged Thr-tRNA(Val) in a tRNA-dependent manner. The sequence is that of Valine--tRNA ligase from Brucella melitensis biotype 1 (strain ATCC 23456 / CCUG 17765 / NCTC 10094 / 16M).